Reading from the N-terminus, the 455-residue chain is Alcohol acyl transferase 1 allele RGb (455 aa).

Active-site proton acceptor residues include His-164 and Asn-385.

The protein belongs to the plant acyltransferase family.

Involved in the biosynthesis of volatile esters which confer ripe apple fruit flavor. Alcohol acyl transferase that can use a wide range of alcohols as substrate to produce esters. The polypeptide is Alcohol acyl transferase 1 allele RGb (Malus domestica (Apple)).